We begin with the raw amino-acid sequence, 152 residues long: Large ribosomal subunit protein uL15 (152 aa).

Polar residues predominate over residues 1–13 (MLTLGNLSPQEGS). The interval 1-62 (MLTLGNLSPQ…GGQMPLQRRL (62 aa)) is disordered. A compositionally biased stretch (basic residues) spans 31–40 (TAGRGHKGFK).

This sequence belongs to the universal ribosomal protein uL15 family. As to quaternary structure, part of the 50S ribosomal subunit.

In terms of biological role, binds to the 23S rRNA. This is Large ribosomal subunit protein uL15 from Desulfotalea psychrophila (strain LSv54 / DSM 12343).